The following is a 313-amino-acid chain: Ribosomal RNA small subunit methyltransferase H (313 aa).

Residues 35-37 (GGH), D55, F79, D100, and Q107 contribute to the S-adenosyl-L-methionine site.

It belongs to the methyltransferase superfamily. RsmH family.

It is found in the cytoplasm. The catalysed reaction is cytidine(1402) in 16S rRNA + S-adenosyl-L-methionine = N(4)-methylcytidine(1402) in 16S rRNA + S-adenosyl-L-homocysteine + H(+). Its function is as follows. Specifically methylates the N4 position of cytidine in position 1402 (C1402) of 16S rRNA. In Burkholderia multivorans (strain ATCC 17616 / 249), this protein is Ribosomal RNA small subunit methyltransferase H.